The following is a 368-amino-acid chain: Phosphoribosylformylglycinamidine cyclo-ligase (368 aa).

Belongs to the AIR synthase family.

It localises to the cytoplasm. The catalysed reaction is 2-formamido-N(1)-(5-O-phospho-beta-D-ribosyl)acetamidine + ATP = 5-amino-1-(5-phospho-beta-D-ribosyl)imidazole + ADP + phosphate + H(+). It participates in purine metabolism; IMP biosynthesis via de novo pathway; 5-amino-1-(5-phospho-D-ribosyl)imidazole from N(2)-formyl-N(1)-(5-phospho-D-ribosyl)glycinamide: step 2/2. The protein is Phosphoribosylformylglycinamidine cyclo-ligase of Chelativorans sp. (strain BNC1).